The chain runs to 472 residues: ATP-dependent rRNA helicase rrp3 (472 aa).

The interval 1-52 (MRDVKKRKIAHEAPEHGSDTESTSSHKSVAQQDDPLETQDEATATESRPAPK) is disordered. Positions 10-19 (AHEAPEHGSD) are enriched in basic and acidic residues. Residues 20-31 (TESTSSHKSVAQ) are compositionally biased toward polar residues. Residues 52–80 (KSFKDLGIIDQLCEACETMGYKAPTPIQA) carry the Q motif motif. The 172-residue stretch at 83–254 (IPLALQGRDL…RASLSNPLRV (172 aa)) folds into the Helicase ATP-binding domain. 96-103 (AETGSGKT) serves as a coordination point for ATP. The DEAD box motif lies at 202-205 (DEAD). The Helicase C-terminal domain occupies 282-426 (YLVYLLNEFV…EYELEKDEVM (145 aa)). A disordered region spans residues 444–472 (KNFDEKRGTKAKKFGKGKRSRDEMDQEEG). A compositionally biased stretch (basic residues) spans 452–462 (TKAKKFGKGKR).

This sequence belongs to the DEAD box helicase family. DDX47/RRP3 subfamily. In terms of assembly, interacts with the SSU processome.

Its subcellular location is the nucleus. It catalyses the reaction ATP + H2O = ADP + phosphate + H(+). ATP-dependent rRNA helicase required for pre-ribosomal RNA processing. Involved in the maturation of the 35S-pre-rRNA and to its cleavage to mature 18S rRNA. The protein is ATP-dependent rRNA helicase rrp3 of Aspergillus fumigatus (strain ATCC MYA-4609 / CBS 101355 / FGSC A1100 / Af293) (Neosartorya fumigata).